Here is a 333-residue protein sequence, read N- to C-terminus: Ferrochelatase (333 aa).

Fe cation is bound by residues His202 and Glu284.

Belongs to the ferrochelatase family.

The protein localises to the cytoplasm. The catalysed reaction is heme b + 2 H(+) = protoporphyrin IX + Fe(2+). It functions in the pathway porphyrin-containing compound metabolism; protoheme biosynthesis; protoheme from protoporphyrin-IX: step 1/1. In terms of biological role, catalyzes the ferrous insertion into protoporphyrin IX. The polypeptide is Ferrochelatase (Francisella tularensis subsp. novicida (strain U112)).